A 108-amino-acid chain; its full sequence is DIQMTQSPDYLSASVGETVTITCRASENIYSYLAWYQQKQGKSPQLLVYDAKTLVEGVPSRFSGSGSGTQFSLKINSLQPEDFGSYYCQHHYGIPFTFGSGTKLEIKR.

Residues 1 to 23 (DIQMTQSPDYLSASVGETVTITC) form a framework-1 region. C23 and C88 form a disulfide bridge. The segment at 24–34 (RASENIYSYLA) is complementarity-determining-1. Residues 35 to 49 (WYQQKQGKSPQLLVY) form a framework-2 region. Residues 50 to 56 (DAKTLVE) form a complementarity-determining-2 region. A framework-3 region spans residues 57–88 (GVPSRFSGSGSGTQFSLKINSLQPEDFGSYYC). The segment at 89–97 (QHHYGIPFT) is complementarity-determining-3. Residues 98–108 (FGSGTKLEIKR) are framework-4.

This chain is Ig kappa chain V-V region MOPC 149, found in Mus musculus (Mouse).